We begin with the raw amino-acid sequence, 584 residues long: Arginine--tRNA ligase (584 aa).

A 'HIGH' region motif is present at residues 126–136 (PNIAKEMHVGH).

The protein belongs to the class-I aminoacyl-tRNA synthetase family. Monomer.

The protein localises to the cytoplasm. It carries out the reaction tRNA(Arg) + L-arginine + ATP = L-arginyl-tRNA(Arg) + AMP + diphosphate. This is Arginine--tRNA ligase from Synechococcus sp. (strain ATCC 27144 / PCC 6301 / SAUG 1402/1) (Anacystis nidulans).